Here is a 141-residue protein sequence, read N- to C-terminus: Nucleoside diphosphate kinase (141 aa).

ATP is bound by residues K11, F59, R87, T93, R104, and N114. The active-site Pros-phosphohistidine intermediate is H117.

This sequence belongs to the NDK family. As to quaternary structure, homotetramer. The cofactor is Mg(2+).

The protein resides in the cytoplasm. The catalysed reaction is a 2'-deoxyribonucleoside 5'-diphosphate + ATP = a 2'-deoxyribonucleoside 5'-triphosphate + ADP. It catalyses the reaction a ribonucleoside 5'-diphosphate + ATP = a ribonucleoside 5'-triphosphate + ADP. Functionally, major role in the synthesis of nucleoside triphosphates other than ATP. The ATP gamma phosphate is transferred to the NDP beta phosphate via a ping-pong mechanism, using a phosphorylated active-site intermediate. The protein is Nucleoside diphosphate kinase of Xylella fastidiosa (strain 9a5c).